Consider the following 71-residue polypeptide: Protein SlyX homolog (71 aa).

The tract at residues K49–Y71 is disordered.

Belongs to the SlyX family.

The sequence is that of Protein SlyX homolog from Pseudoalteromonas translucida (strain TAC 125).